We begin with the raw amino-acid sequence, 182 residues long: ADP-ribosylation factor-like protein 3 (182 aa).

G2 carries N-myristoyl glycine lipidation. Residues 24–31 (GLDNAGKT), 67–71 (DIGGQ), and 126–129 (NKQD) each bind GTP.

It belongs to the small GTPase superfamily. Arf family.

The protein resides in the golgi apparatus membrane. The protein localises to the cytoplasm. It is found in the cytoskeleton. It localises to the spindle. Its subcellular location is the nucleus. The protein resides in the microtubule organizing center. The protein localises to the centrosome. It is found in the cell projection. It localises to the cilium. Functionally, small GTP-binding protein which cycles between an inactive GDP-bound and an active GTP-bound form, and the rate of cycling is regulated by guanine nucleotide exchange factors (GEF) and GTPase-activating proteins (GAP). Required for normal cytokinesis and cilia signaling. Required for targeting proteins to the ciliary membrane by releasing myristoylated protein from unc119 cargo adapters into the cilium. In Taeniopygia guttata (Zebra finch), this protein is ADP-ribosylation factor-like protein 3 (ARL3).